Consider the following 375-residue polypeptide: Phosphoglycerate kinase (375 aa).

The (2R)-3-phosphoglycerate site is built by V1, D2, F3, N4, R17, S40, H41, G43, R44, L99, R100, H147, and R148. G191 is an ADP binding site. G191 contacts CDP. Residues A192 and K193 each coordinate AMP. A192 is a binding site for ATP. A192 contacts Mg(2+). D196 contributes to the CDP binding site. D196 serves as a coordination point for Mg(2+). Residue K197 coordinates AMP. Residue K197 participates in ATP binding. G215 provides a ligand contact to ADP. G215 contributes to the CDP binding site. Residues G216 and G290 each contribute to the AMP site. G216 and G290 together coordinate ATP. The CDP site is built by G315 and F320. F320 lines the ADP pocket. E321 is a binding site for AMP. ATP-binding residues include E321, D352, and T353. D352 contributes to the Mg(2+) binding site.

This sequence belongs to the phosphoglycerate kinase family. As to quaternary structure, monomer. The cofactor is Mg(2+).

The catalysed reaction is (2R)-3-phosphoglycerate + ATP = (2R)-3-phospho-glyceroyl phosphate + ADP. It participates in carbohydrate degradation; glycolysis; pyruvate from D-glyceraldehyde 3-phosphate: step 2/5. This is Phosphoglycerate kinase (PGK) from Tetrahymena pyriformis.